The primary structure comprises 399 residues: 5'-C-glycyluridine monooxygenase-decarboxylase (399 aa).

Residue Thr-179 participates in phosphate binding. Lys-230 is modified (N6-(pyridoxal phosphate)lysine). Arg-318, Arg-322, Arg-353, and Arg-367 together coordinate phosphate.

Belongs to the SelA family. Homooctamer; tetramer of homodimers. It depends on pyridoxal 5'-phosphate as a cofactor.

The enzyme catalyses (5'S,6'R)-C-glycyluridine + O2 = uridine-5'-carboxamide + CO2 + H2O. Its pathway is antibiotic biosynthesis. Activity is dependent on phosphate. In terms of biological role, monooxygenase-decarboxylase involved in the biosynthesis of the capuramycin-type nucleoside antibiotic A-503083. Catalyzes the oxidative decarboxylation of 5'-C-glycyluridine (GlyU) to uridine-5'-carboxamide (CarU). Is stereospecific for the (5'S,6'R)-diastereomer of GlyU. Directly incorporates a single oxygen atom from O(2) into the product CarU. The sequence is that of 5'-C-glycyluridine monooxygenase-decarboxylase from Streptomyces sp.